A 370-amino-acid polypeptide reads, in one-letter code: MLGQVVTLILLLLLKVYQGKGCQGSADHVVSISGVPLQLQPNSIQTKVDSIAWKKLLPSQNGFHHILKWENGSLPSNTSNDRFSFIVKNLSLLIKAAQQQDSGLYCLEVTSISGKVQTATFQVFVFESLLPDKVEKPRLQGQGKILDRGRCQVALSCLVSRDGNVSYAWYRGSKLIQTAGNLTYLDEEVDINGTHTYTCNVSNPVSWESHTLNLTQDCQNAHQEFRFWPFLVIIVILSALFLGTLACFCVWRRKRKEKQSETSPKEFLTIYEDVKDLKTRRNHEQEQTFPGGGSTIYSMIQSQSSAPTSQEPAYTLYSLIQPSRKSGSRKRNHSPSFNSTIYEVIGKSQPKAQNPARLSRKELENFDVYS.

An N-terminal signal peptide occupies residues 1-21 (MLGQVVTLILLLLLKVYQGKG). Ig-like domains lie at 22–127 (CQGS…FVFE) and 131–215 (PDKV…LNLT). Residues 22-229 (CQGSADHVVS…NAHQEFRFWP (208 aa)) are Extracellular-facing. Residues N71, N77, N89, N164, N181, N192, N200, and N213 are each glycosylated (N-linked (GlcNAc...) asparagine). A disulfide bond links C157 and C199. A helical transmembrane segment spans residues 230 to 250 (FLVIIVILSALFLGTLACFCV). Residues 251-370 (WRRKRKEKQS…KELENFDVYS (120 aa)) are Cytoplasmic-facing. Short sequence motifs (ITSM) lie at residues 269-274 (TIYEDV), 295-300 (TIYSMI), 315-320 (TLYSLI), and 340-345 (TIYEVI). Y271 carries the phosphotyrosine modification. At Y297 the chain carries Phosphotyrosine; by FYN. Position 317 is a phosphotyrosine (Y317). Positions 324–370 (RKSGSRKRNHSPSFNSTIYEVIGKSQPKAQNPARLSRKELENFDVYS) are disordered. Y342 carries the post-translational modification Phosphotyrosine; by FYN.

As to quaternary structure, interacts with CD48. Interacts (via phosphorylated ITSM 1-4) with SH2D1A (via SH2 domain); SH2D1A probably mediates association with FYN. Interacts (via phosphorylated ITSM 3) with PTPN11/SHP-2, INPP5D/SHIP1, PTPN6/SHP-1 and CSK; binding of SH2D1A/SAP prevents association with PTPN11, PTPN6 and CSK; conflictingly a similar association has been described for phosphorylated ITSM 1 also including GRB2 and PLCG1. Interacts weakly (via phosphorylated ITSM 2) with PTPN11/SHP-2 and CSK. Interacts with SH2D1B. Interacts with PIK3R1; PI3K recruits SH2D1A. Interacts with MHC class I proteins; the interaction is proposed to prevent self-killing of NK cells. N-linked glycosylation is essential for the binding to its ligand CD48. Also O-glycosylated, in contrast, O-linked sialylation has a negative impact on ligand binding. Post-translationally, phosphorylated by FYN and CSK on tyrosine residues following activation. Coligation with inhibitory receptors such as KIR2DL1 inhibits phosphorylation upon contact of NK cells with sensitive target cells. As to expression, expressed in spleen, PBL, followed by lung, liver, testis and small intestine. Expressed in all natural killer (NK) cells, monocytes and basophils, TCR-gamma/delta+ T-cells, monocytes, basophils, and on a subset of CD8(+) T-cells.

The protein localises to the membrane. It is found in the cell membrane. It localises to the membrane raft. In terms of biological role, heterophilic receptor of the signaling lymphocytic activation molecule (SLAM) family; its ligand is CD48. SLAM receptors triggered by homo- or heterotypic cell-cell interactions are modulating the activation and differentiation of a wide variety of immune cells and thus are involved in the regulation and interconnection of both innate and adaptive immune response. Activities are controlled by presence or absence of small cytoplasmic adapter proteins, SH2D1A/SAP and/or SH2D1B/EAT-2. Acts as activating natural killer (NK) cell receptor. Activating function implicates association with SH2D1A and FYN. Downstreaming signaling involves predominantly VAV1, and, to a lesser degree, INPP5D/SHIP1 and CBL. Signal attenuation in the absence of SH2D1A is proposed to be dependent on INPP5D and to a lesser extent PTPN6/SHP-1 and PTPN11/SHP-2. Stimulates NK cell cytotoxicity, production of IFN-gamma and granule exocytosis. Optimal expansion and activation of NK cells seems to be dependent on the engagement of CD244 with CD48 expressed on neighboring NK cells. Acts as costimulator in NK activation by enhancing signals by other NK receptors such as NCR3 and NCR1. At early stages of NK cell differentiation may function as an inhibitory receptor possibly ensuring the self-tolerance of developing NK cells. Involved in the regulation of CD8(+) T-cell proliferation; expression on activated T-cells and binding to CD48 provides costimulatory-like function for neighboring T-cells. Inhibits inflammatory responses in dendritic cells (DCs). The protein is Natural killer cell receptor 2B4 (CD244) of Homo sapiens (Human).